The following is a 631-amino-acid chain: tRNA uridine 5-carboxymethylaminomethyl modification enzyme MnmG (631 aa).

Position 14 to 19 (14 to 19 (GGGHAG)) interacts with FAD. An NAD(+)-binding site is contributed by 274 to 288 (GPRYCPSIEDKIHRF).

Belongs to the MnmG family. Homodimer. Heterotetramer of two MnmE and two MnmG subunits. It depends on FAD as a cofactor.

The protein resides in the cytoplasm. NAD-binding protein involved in the addition of a carboxymethylaminomethyl (cmnm) group at the wobble position (U34) of certain tRNAs, forming tRNA-cmnm(5)s(2)U34. This is tRNA uridine 5-carboxymethylaminomethyl modification enzyme MnmG from Pseudomonas paraeruginosa (strain DSM 24068 / PA7) (Pseudomonas aeruginosa (strain PA7)).